We begin with the raw amino-acid sequence, 535 residues long: Phosphoenolpyruvate carboxykinase (ATP) 1 (535 aa).

Residues Arg-58, Tyr-193, and Lys-199 each coordinate substrate. Residues Lys-199, His-218, and 234–242 (GLSGTGKTT) contribute to the ATP site. Residues Lys-199 and His-218 each contribute to the Mn(2+) site. Asp-255 contributes to the Mn(2+) binding site. Residues Glu-283, Arg-321, 440-441 (RI), and Thr-446 contribute to the ATP site. Arg-321 contacts substrate.

This sequence belongs to the phosphoenolpyruvate carboxykinase (ATP) family. The cofactor is Mn(2+).

It localises to the cytoplasm. It carries out the reaction oxaloacetate + ATP = phosphoenolpyruvate + ADP + CO2. It functions in the pathway carbohydrate biosynthesis; gluconeogenesis. Involved in the gluconeogenesis. Catalyzes the conversion of oxaloacetate (OAA) to phosphoenolpyruvate (PEP) through direct phosphoryl transfer between the nucleoside triphosphate and OAA. The chain is Phosphoenolpyruvate carboxykinase (ATP) 1 from Salinibacter ruber (strain DSM 13855 / M31).